The primary structure comprises 510 residues: Probable DNA ligase (510 aa).

Glu-210 is an ATP binding site. Catalysis depends on Lys-212, which acts as the N6-AMP-lysine intermediate. ATP-binding residues include Arg-217, Arg-232, Glu-261, Phe-296, Arg-367, and Lys-373.

This sequence belongs to the ATP-dependent DNA ligase family. Mg(2+) is required as a cofactor.

The enzyme catalyses ATP + (deoxyribonucleotide)n-3'-hydroxyl + 5'-phospho-(deoxyribonucleotide)m = (deoxyribonucleotide)n+m + AMP + diphosphate.. In terms of biological role, DNA ligase that seals nicks in double-stranded DNA during DNA replication, DNA recombination and DNA repair. The protein is Probable DNA ligase of Saccharopolyspora erythraea (strain ATCC 11635 / DSM 40517 / JCM 4748 / NBRC 13426 / NCIMB 8594 / NRRL 2338).